Here is a 160-residue protein sequence, read N- to C-terminus: Glyoxalase domain-containing protein 5 (160 aa).

The 121-residue stretch at 33-153 (RLDHLVLTVR…DHNLIEVSNY (121 aa)) folds into the VOC domain.

The protein belongs to the glyoxalase I family.

This is Glyoxalase domain-containing protein 5 (glod5) from Xenopus laevis (African clawed frog).